Here is a 98-residue protein sequence, read N- to C-terminus: Protein Asterix (98 aa).

2 helical membrane-spanning segments follow: residues 32–52 (LFSI…CLWV) and 78–98 (VSLS…NLFV).

The protein belongs to the Asterix family.

Its subcellular location is the membrane. In Dictyostelium discoideum (Social amoeba), this protein is Protein Asterix.